Consider the following 500-residue polypeptide: Probable cytosol aminopeptidase (500 aa).

Residues lysine 265 and aspartate 270 each coordinate Mn(2+). Lysine 277 is an active-site residue. Mn(2+) is bound by residues aspartate 288, aspartate 347, and glutamate 349. Arginine 351 is a catalytic residue.

Belongs to the peptidase M17 family. It depends on Mn(2+) as a cofactor.

Its subcellular location is the cytoplasm. It carries out the reaction Release of an N-terminal amino acid, Xaa-|-Yaa-, in which Xaa is preferably Leu, but may be other amino acids including Pro although not Arg or Lys, and Yaa may be Pro. Amino acid amides and methyl esters are also readily hydrolyzed, but rates on arylamides are exceedingly low.. It catalyses the reaction Release of an N-terminal amino acid, preferentially leucine, but not glutamic or aspartic acids.. Presumably involved in the processing and regular turnover of intracellular proteins. Catalyzes the removal of unsubstituted N-terminal amino acids from various peptides. The chain is Probable cytosol aminopeptidase from Corynebacterium diphtheriae (strain ATCC 700971 / NCTC 13129 / Biotype gravis).